Here is a 201-residue protein sequence, read N- to C-terminus: uncharacterized protein (201 aa).

This sequence belongs to the phosphatidylethanolamine-binding protein family.

This is an uncharacterized protein from Saccharomyces cerevisiae (strain ATCC 204508 / S288c) (Baker's yeast).